The primary structure comprises 524 residues: MVAKDYPFYLTVKRANCSLEAPLGSGVAKDEEPSNKRVKPLSRVTSLANLIPPVKTTPLKRFSQTLQRSISFRSESRPDILAPRAWSRNATSSSTKRRDSKLWSETFDVCVNQVLTAKEIKRQEAIFELSQGEEDLIEDLKLAKKAYHDPMLKLSIMTEQELNQIFGTLDSLIPLHEELLSQLRDVRKPDGSTEHVGPILVGWLPCLSSYDSYCSNQVAAKALLDHKKQDHRVQDFLQRCLESPFSRKLDLWNFLDIPRSRLVKYPLLLREILRHTPNDNPDQQHLEEAINIIQGIVAEINTKTGESECRYYKERLLYLEEGQKDSLIDSSRVLCCHGELKNNRGVKLHVFLFQEVLVITRAVTHNEQLCYQLYRQPIPVKDLTLEDLQDGEVRLGGSLRGAFSNNERVKNFFRVSFKNGSQSQTHSLQANDTFNKQQWLNCIRQAKETVLSAAGQAGLLDSEGLVQGPGTENREPQGETKLEQMDQSDSESDCSMDTSEVSLECERMEQTDASCANSRPEESV.

Ser46 and Ser69 each carry phosphoserine. The 183-residue stretch at 121–303 (KRQEAIFELS…QGIVAEINTK (183 aa)) folds into the DH domain. A PH domain is found at 290–448 (INIIQGIVAE…WLNCIRQAKE (159 aa)). The tract at residues 461 to 524 (DSEGLVQGPG…CANSRPEESV (64 aa)) is disordered. Residues 472-484 (ENREPQGETKLEQ) are compositionally biased toward basic and acidic residues.

Interacts with RHOA and RHOB.

The protein resides in the cytoplasm. Acts as a guanine nucleotide exchange factor (GEF) for RhoA and RhoB GTPases. The polypeptide is Rho guanine nucleotide exchange factor 3 (Arhgef3) (Mus musculus (Mouse)).